We begin with the raw amino-acid sequence, 187 residues long: UPF0398 protein LBA1157 (187 aa).

It belongs to the UPF0398 family.

This is UPF0398 protein LBA1157 from Lactobacillus acidophilus (strain ATCC 700396 / NCK56 / N2 / NCFM).